The chain runs to 509 residues: Activin receptor type-1 (509 aa).

An N-terminal signal peptide occupies residues 1–20; that stretch reads MVDGVMILPVLIMIALPSPS. Residues 21 to 123 lie on the Extracellular side of the membrane; it reads MEDEKPKVNP…FPGTQNFHLE (103 aa). N-linked (GlcNAc...) asparagine glycosylation is present at asparagine 102. Residues 124 to 146 form a helical membrane-spanning segment; sequence VGLIILSVVFAVCLLACLLGVAL. Topologically, residues 147–509 are cytoplasmic; sequence RKFKRRNQER…NSLDKLKTDC (363 aa). Positions 178 to 207 constitute a GS domain; the sequence is STLADLLDHSCTSGSGSGLPFLVQRTVARQ. The region spanning 208 to 502 is the Protein kinase domain; it reads ITLLECVGKG…KTLTKIDNSL (295 aa). Residues 214 to 222 and lysine 235 each bind ATP; that span reads VGKGRYGEV. Aspartate 336 (proton acceptor) is an active-site residue. Residue serine 501 is modified to Phosphoserine.

The protein belongs to the protein kinase superfamily. TKL Ser/Thr protein kinase family. TGFB receptor subfamily. Interacts with FKBP1A. Interacts with FCHO1. Interacts with CLU. Interacts with type II receptors AMHR2 and ACVR2A. Interacts with BMP7. Interacts with GDF2/BMP9. Interacts with BMP6 (when glycosylated); the interaction may induce HAMP expression. Interacts with TSC22D1/TSC-22. The cofactor is Mg(2+). Mn(2+) serves as cofactor. In terms of tissue distribution, expressed in normal parenchymal cells, endothelial cells, fibroblasts and tumor-derived epithelial cells.

Its subcellular location is the membrane. The enzyme catalyses L-threonyl-[receptor-protein] + ATP = O-phospho-L-threonyl-[receptor-protein] + ADP + H(+). It carries out the reaction L-seryl-[receptor-protein] + ATP = O-phospho-L-seryl-[receptor-protein] + ADP + H(+). In terms of biological role, bone morphogenetic protein (BMP) type I receptor that is involved in a wide variety of biological processes, including bone, heart, cartilage, nervous, and reproductive system development and regulation. As a type I receptor, forms heterotetrameric receptor complexes with the type II receptors AMHR2, ACVR2A or ACVR2B. Upon binding of ligands such as BMP7 or GDF2/BMP9 to the heteromeric complexes, type II receptors transphosphorylate ACVR1 intracellular domain. In turn, ACVR1 kinase domain is activated and subsequently phosphorylates SMAD1/5/8 proteins that transduce the signal. In addition to its role in mediating BMP pathway-specific signaling, suppresses TGFbeta/activin pathway signaling by interfering with the binding of activin to its type II receptor. Besides canonical SMAD signaling, can activate non-canonical pathways such as p38 mitogen-activated protein kinases/MAPKs. May promote the expression of HAMP, potentially via its interaction with BMP6. The chain is Activin receptor type-1 (ACVR1) from Homo sapiens (Human).